A 202-amino-acid chain; its full sequence is MKHRRIAILGGTFNPVHHGHLIMAEQALWQFDLDQVLWMPAGDPPHKPLAPGASKADRLAMVKLAIADHERFACSELEIRRSGRSYTIETLRTLIQEQPNTQWYWIIGVDALRDLPQWYQAEELARLCHWIVAPRVDAGDAAQVLQAVAAKLPIQAQILEAPTLTLSSTYLRQQIQKGGSIRYLVPPAVEHYIRQHRLYLQP.

This sequence belongs to the NadD family.

It catalyses the reaction nicotinate beta-D-ribonucleotide + ATP + H(+) = deamido-NAD(+) + diphosphate. The protein operates within cofactor biosynthesis; NAD(+) biosynthesis; deamido-NAD(+) from nicotinate D-ribonucleotide: step 1/1. Its function is as follows. Catalyzes the reversible adenylation of nicotinate mononucleotide (NaMN) to nicotinic acid adenine dinucleotide (NaAD). The chain is Probable nicotinate-nucleotide adenylyltransferase from Synechococcus sp. (strain JA-2-3B'a(2-13)) (Cyanobacteria bacterium Yellowstone B-Prime).